A 275-amino-acid polypeptide reads, in one-letter code: Dermonecrotic toxin SpeSicTox-betaIIA2iii (275 aa).

The active site involves His-5. Mg(2+) is bound by residues Glu-25 and Asp-27. His-41 acts as the Nucleophile in catalysis. 2 disulfide bridges follow: Cys-45/Cys-51 and Cys-47/Cys-190. Asp-85 serves as a coordination point for Mg(2+).

The protein belongs to the arthropod phospholipase D family. Class II subfamily. The cofactor is Mg(2+). Expressed by the venom gland.

The protein resides in the secreted. It catalyses the reaction an N-(acyl)-sphingosylphosphocholine = an N-(acyl)-sphingosyl-1,3-cyclic phosphate + choline. The enzyme catalyses an N-(acyl)-sphingosylphosphoethanolamine = an N-(acyl)-sphingosyl-1,3-cyclic phosphate + ethanolamine. It carries out the reaction a 1-acyl-sn-glycero-3-phosphocholine = a 1-acyl-sn-glycero-2,3-cyclic phosphate + choline. The catalysed reaction is a 1-acyl-sn-glycero-3-phosphoethanolamine = a 1-acyl-sn-glycero-2,3-cyclic phosphate + ethanolamine. Dermonecrotic toxins cleave the phosphodiester linkage between the phosphate and headgroup of certain phospholipids (sphingolipid and lysolipid substrates), forming an alcohol (often choline) and a cyclic phosphate. This toxin acts on sphingomyelin (SM). It may also act on ceramide phosphoethanolamine (CPE), lysophosphatidylcholine (LPC) and lysophosphatidylethanolamine (LPE), but not on lysophosphatidylserine (LPS), and lysophosphatidylglycerol (LPG). It acts by transphosphatidylation, releasing exclusively cyclic phosphate products as second products. Induces dermonecrosis, hemolysis, increased vascular permeability, edema, inflammatory response, and platelet aggregation. This is Dermonecrotic toxin SpeSicTox-betaIIA2iii from Sicarius peruensis (Six-eyed sand spider).